Reading from the N-terminus, the 203-residue chain is High frequency lysogenization protein HflD homolog (203 aa).

The protein belongs to the HflD family.

The protein resides in the cytoplasm. The protein localises to the cell inner membrane. This chain is High frequency lysogenization protein HflD homolog, found in Pasteurella multocida (strain Pm70).